Consider the following 562-residue polypeptide: MRSDMIKKGDHQAPARSLLHATGALKSPTDMNKPFVAICNSYIDIVPGHVHLRELADIAKEAIREAGAIPFEFNTIGVDDGIAMGHIGMRYSLPSREIIADAAETVINAHWFDGVFYIPNCDKITPGMILAAMRTNVPAIFCSGGPMKAGLSAHGKALTLSSMFEAVGAFKEGSISKEEFLDMEQNACPTCGSCAGMFTANSMNCLMEVLGLTLPYNGTALAVSDQRREMIRQAAFKLVENIKNDLKPRDIVTREAIDDAFALDMAMGGSTNTVLHTLAIANEAGIDYDLERINAIAKRTPYLSKIAPSSSYSMHDVHEAGGVPAIINELMKKDGTLHPDRITVTGKTLRENNEGKEIKNFDVIHPLDAPYDAQGGLSILFGNIAPKGAVIKVGGVDPSIKTFTGKAICFNSHDEAVEAIDNRTVRAGHVVVIRYEGPKGGPGMPEMLAPTSSIVGRGLGKDVALITDGRFSGATRGIAVGHISPEAASGGPIALIEDGDEITIDLTNRTLNVNQPEDVLARRRESLTPFKAKVKTGYLARYTALVTSANTGGVMQVPENLI.

D80 provides a ligand contact to Mg(2+). Residue C121 coordinates [2Fe-2S] cluster. Mg(2+) contacts are provided by D122 and K123. N6-carboxylysine is present on K123. A [2Fe-2S] cluster-binding site is contributed by C194. E446 lines the Mg(2+) pocket. S472 acts as the Proton acceptor in catalysis.

The protein belongs to the IlvD/Edd family. As to quaternary structure, homodimer. The cofactor is [2Fe-2S] cluster. Mg(2+) serves as cofactor.

The enzyme catalyses (2R)-2,3-dihydroxy-3-methylbutanoate = 3-methyl-2-oxobutanoate + H2O. It catalyses the reaction (2R,3R)-2,3-dihydroxy-3-methylpentanoate = (S)-3-methyl-2-oxopentanoate + H2O. The protein operates within amino-acid biosynthesis; L-isoleucine biosynthesis; L-isoleucine from 2-oxobutanoate: step 3/4. It functions in the pathway amino-acid biosynthesis; L-valine biosynthesis; L-valine from pyruvate: step 3/4. In terms of biological role, functions in the biosynthesis of branched-chain amino acids. Catalyzes the dehydration of (2R,3R)-2,3-dihydroxy-3-methylpentanoate (2,3-dihydroxy-3-methylvalerate) into 2-oxo-3-methylpentanoate (2-oxo-3-methylvalerate) and of (2R)-2,3-dihydroxy-3-methylbutanoate (2,3-dihydroxyisovalerate) into 2-oxo-3-methylbutanoate (2-oxoisovalerate), the penultimate precursor to L-isoleucine and L-valine, respectively. This is Dihydroxy-acid dehydratase from Staphylococcus aureus (strain USA300 / TCH1516).